A 281-amino-acid chain; its full sequence is MKVIKTLSIINFFIFVTFNIKNESKYSNTFINNAYNMSIRRSMEESNPPTGASGRAGAGASGRAGAGASGRAGAGAGAVASAGSGDGAVASAGNGANPGADAKRSTSTPATTTTTTTTNDAEASTSTSSENPNHNNAKTNPKGKEVQEPNKANTETQNNSNVQQDSQTKSNVPPTQDADTKSPTAQPEQAENSAPTAEQTESPELQSAPENKGTGQHGHMHGSRNNHPQNTSDSQKECTDGNKENCGAATSLLNNSSNIASINKFVVLISATLVLSFAIFI.

The signal sequence occupies residues 1–20 (MKVIKTLSIINFFIFVTFNI). 2 N-linked (GlcNAc...) asparagine glycosylation sites follow: Asn-22 and Asn-36. Positions 42–242 (SMEESNPPTG…DSQKECTDGN (201 aa)) are disordered. Residues 44-207 (EESNPPTGAS…EQTESPELQS (164 aa)) form a polymorphic region region. Tandem repeats lie at residues 51-58 (GASGRAGA), 59-66 (GASGRAGA), and 67-74 (GASGRAGA). Residues 51-74 (GASGRAGAGASGRAGAGASGRAGA) are 3 X 8 AA tandem repeats of G-A-S-G-R-A-G-A. The span at 54–76 (GRAGAGASGRAGAGASGRAGAGA) shows a compositional bias: gly residues. Residues 77–133 (GAVASAGSGDGAVASAGNGANPGADAKRSTSTPATTTTTTTTNDAEASTSTSSENPN) show a composition bias toward low complexity. 2 stretches are compositionally biased toward polar residues: residues 150–174 (NKAN…NVPP) and 181–209 (KSPT…QSAP). Asn-158 carries an N-linked (GlcNAc...) asparagine glycan. A glycan (N-linked (GlcNAc...) asparagine) is linked at Asn-230. A disulfide bond links Cys-238 and Cys-246. Asn-254 and Asn-255 each carry an N-linked (GlcNAc...) asparagine glycan. The GPI-anchor amidated asparagine moiety is linked to residue Asn-255. Positions 256-281 (SSNIASINKFVVLISATLVLSFAIFI) are cleaved as a propeptide — removed in mature form.

The protein resides in the cell membrane. Its function is as follows. May play a role in the merozoite attachment to the erythrocyte. In Plasmodium falciparum (isolate thtn / Thailand), this protein is Merozoite surface protein 2.